Here is a 594-residue protein sequence, read N- to C-terminus: Arginine--tRNA ligase (594 aa).

Residues 139–149 (ANPTGPLHVGH) carry the 'HIGH' region motif.

Belongs to the class-I aminoacyl-tRNA synthetase family. As to quaternary structure, monomer.

It localises to the cytoplasm. It carries out the reaction tRNA(Arg) + L-arginine + ATP = L-arginyl-tRNA(Arg) + AMP + diphosphate. The chain is Arginine--tRNA ligase from Burkholderia pseudomallei (strain 1106a).